Here is a 339-residue protein sequence, read N- to C-terminus: Dihydroorotate dehydrogenase (quinone) (339 aa).

FMN is bound by residues alanine 62 to lysine 66 and threonine 86. Lysine 66 serves as a coordination point for substrate. Asparagine 111–phenylalanine 115 provides a ligand contact to substrate. 2 residues coordinate FMN: asparagine 139 and asparagine 172. Position 172 (asparagine 172) interacts with substrate. Catalysis depends on serine 175, which acts as the Nucleophile. Asparagine 177 lines the substrate pocket. The FMN site is built by lysine 217 and threonine 245. Asparagine 246–threonine 247 serves as a coordination point for substrate. FMN is bound by residues glycine 268, glycine 297, and tyrosine 318 to serine 319.

The protein belongs to the dihydroorotate dehydrogenase family. Type 2 subfamily. As to quaternary structure, monomer. Requires FMN as cofactor.

The protein resides in the cell membrane. It carries out the reaction (S)-dihydroorotate + a quinone = orotate + a quinol. It functions in the pathway pyrimidine metabolism; UMP biosynthesis via de novo pathway; orotate from (S)-dihydroorotate (quinone route): step 1/1. Catalyzes the conversion of dihydroorotate to orotate with quinone as electron acceptor. This is Dihydroorotate dehydrogenase (quinone) from Shewanella oneidensis (strain ATCC 700550 / JCM 31522 / CIP 106686 / LMG 19005 / NCIMB 14063 / MR-1).